Consider the following 341-residue polypeptide: Farnesyl pyrophosphate synthase (341 aa).

Isopentenyl diphosphate contacts are provided by Lys48, Arg51, and Gln86. Mg(2+)-binding residues include Asp93 and Asp97. Arg102 is a binding site for dimethylallyl diphosphate. Arg103 is a binding site for isopentenyl diphosphate. Dimethylallyl diphosphate-binding residues include Lys190, Thr191, Gln229, and Lys246.

It belongs to the FPP/GGPP synthase family. The cofactor is Mg(2+).

It is found in the cytoplasm. The enzyme catalyses isopentenyl diphosphate + dimethylallyl diphosphate = (2E)-geranyl diphosphate + diphosphate. It catalyses the reaction isopentenyl diphosphate + (2E)-geranyl diphosphate = (2E,6E)-farnesyl diphosphate + diphosphate. It functions in the pathway isoprenoid biosynthesis; farnesyl diphosphate biosynthesis; farnesyl diphosphate from geranyl diphosphate and isopentenyl diphosphate: step 1/1. The protein operates within isoprenoid biosynthesis; geranyl diphosphate biosynthesis; geranyl diphosphate from dimethylallyl diphosphate and isopentenyl diphosphate: step 1/1. In terms of biological role, catalyzes the sequential condensation of isopentenyl pyrophosphate with the allylic pyrophosphates, dimethylallyl pyrophosphate, and then with the resultant geranylpyrophosphate to the ultimate product farnesyl pyrophosphate. In Helianthus annuus (Common sunflower), this protein is Farnesyl pyrophosphate synthase (FPS1).